The chain runs to 156 residues: Snaclec alboaggregin-B subunit alpha (156 aa).

Positions 1–23 (MGRFIFVSFGLLVVFLSLSGTGA) are cleaved as a signal peptide. One can recognise a C-type lectin domain in the interval 24–151 (DCPSDWSSFK…CEQKHIFMCK (128 aa)). 3 cysteine pairs are disulfide-bonded: Cys-25-Cys-36, Cys-53-Cys-150, and Cys-125-Cys-142.

The protein belongs to the snaclec family. As to quaternary structure, heterodimer of subunits alpha and beta; disulfide-linked. As to expression, expressed by the venom gland.

It is found in the secreted. In terms of biological role, weakly agglutinates platelets at high doses by binding to GPIbalpha (GP1BA). The sequence is that of Snaclec alboaggregin-B subunit alpha from Trimeresurus albolabris (White-lipped pit viper).